We begin with the raw amino-acid sequence, 520 residues long: Dual specificity tyrosine-phosphorylation-regulated kinase 4 (520 aa).

The interval Met1–Gln32 is disordered. The Bipartite nuclear localization signal signature appears at Thr19–Thr37. Over residues Gln20 to Pro29 the composition is skewed to basic and acidic residues. Positions Tyr104–Ile400 constitute a Protein kinase domain. ATP contacts are provided by residues Ile110–Val118, Lys133, and Phe183–Leu186. Asp230 (proton acceptor) is an active-site residue. Tyr264 carries the post-translational modification Phosphotyrosine; by autocatalysis. The tract at residues Arg404 to Gln467 is disordered. The segment covering Arg439–Thr457 has biased composition (basic and acidic residues).

This sequence belongs to the protein kinase superfamily. CMGC Ser/Thr protein kinase family. MNB/DYRK subfamily. Mg(2+) serves as cofactor. In terms of processing, autophosphorylation on Tyr-264 in the activation loop is required for kinase activity.

The protein localises to the cytoplasm. The protein resides in the nucleus. The catalysed reaction is L-seryl-[protein] + ATP = O-phospho-L-seryl-[protein] + ADP + H(+). It carries out the reaction L-threonyl-[protein] + ATP = O-phospho-L-threonyl-[protein] + ADP + H(+). It catalyses the reaction L-tyrosyl-[protein] + ATP = O-phospho-L-tyrosyl-[protein] + ADP + H(+). Functionally, possible non-essential role in spermiogenesis. The sequence is that of Dual specificity tyrosine-phosphorylation-regulated kinase 4 (DYRK4) from Homo sapiens (Human).